A 68-amino-acid chain; its full sequence is U1-agatoxin-Ta1c (68 aa).

An N-terminal signal peptide occupies residues 1–17; it reads MKLQLMICLVLLPCFFC. Intrachain disulfides connect Cys23–Cys53, Cys39–Cys49, and Cys42–Cys62. Position 67 is a lysine amide (Lys67).

It belongs to the helical arthropod-neuropeptide-derived (HAND) family. Expressed by the venom gland.

It is found in the secreted. Toxin that paralyzes insects. May have a direct effect on the insect central nervous system. This is U1-agatoxin-Ta1c from Eratigena agrestis (Hobo spider).